Consider the following 304-residue polypeptide: Pyridoxal 5'-phosphate synthase subunit PdxS (304 aa).

Asp34 contacts D-ribose 5-phosphate. The active-site Schiff-base intermediate with D-ribose 5-phosphate is Lys91. Residue Gly163 participates in D-ribose 5-phosphate binding. Arg175 contributes to the D-glyceraldehyde 3-phosphate binding site. D-ribose 5-phosphate is bound by residues Gly224 and 245–246 (GS).

Belongs to the PdxS/SNZ family. In the presence of PdxT, forms a dodecamer of heterodimers.

It catalyses the reaction aldehydo-D-ribose 5-phosphate + D-glyceraldehyde 3-phosphate + L-glutamine = pyridoxal 5'-phosphate + L-glutamate + phosphate + 3 H2O + H(+). It functions in the pathway cofactor biosynthesis; pyridoxal 5'-phosphate biosynthesis. Functionally, catalyzes the formation of pyridoxal 5'-phosphate from ribose 5-phosphate (RBP), glyceraldehyde 3-phosphate (G3P) and ammonia. The ammonia is provided by the PdxT subunit. Can also use ribulose 5-phosphate and dihydroxyacetone phosphate as substrates, resulting from enzyme-catalyzed isomerization of RBP and G3P, respectively. The polypeptide is Pyridoxal 5'-phosphate synthase subunit PdxS (Streptomyces avermitilis (strain ATCC 31267 / DSM 46492 / JCM 5070 / NBRC 14893 / NCIMB 12804 / NRRL 8165 / MA-4680)).